The sequence spans 795 residues: Levansucrase (795 aa).

The first 36 residues, 1 to 36 (METKVRKKMYKKGKFWVVATITTAMLTGIGLSSVQA), serve as a signal peptide directing secretion. Polar residues-rich tracts occupy residues 42–66 (TQVS…SAAE) and 112–130 (QAAT…GQTN). 2 disordered regions span residues 42-83 (TQVS…NPAA) and 103-138 (ESKA…ATKE). Residues Trp245, Asp246, and Ser315 each coordinate sucrose. Asp246 serves as the catalytic Nucleophile. Asp394 provides a ligand contact to Ca(2+). Residues Arg399 and Asp400 each contribute to the sucrose site. Gln425, Asn464, and Asp496 together coordinate Ca(2+). Glu497 provides a ligand contact to sucrose. Glu499 (proton donor/acceptor) is an active-site residue. A sucrose-binding site is contributed by Arg517. The helical transmembrane segment at 774 to 794 (GNSFFAALLALFSAFCVSIGF) threads the bilayer.

The protein belongs to the glycosyl hydrolase 68 family.

The protein localises to the cell membrane. The protein resides in the cell surface. It carries out the reaction [6)-beta-D-fructofuranosyl-(2-&gt;](n) alpha-D-glucopyranoside + sucrose = [6)-beta-D-fructofuranosyl-(2-&gt;](n+1) alpha-D-glucopyranoside + D-glucose. Its activity is regulated as follows. Ca(2+) may play an important structural role and promote stability of levansucrase. Functionally, catalyzes the synthesis of levan, a fructose polymer, by transferring the fructosyl moiety from sucrose to a growing acceptor molecule. Also displays sucrose hydrolase activity. The polypeptide is Levansucrase (Streptococcus mutans serotype c (strain ATCC 700610 / UA159)).